A 512-amino-acid chain; its full sequence is Maturase K (512 aa).

The protein belongs to the intron maturase 2 family. MatK subfamily.

It localises to the plastid. The protein resides in the chloroplast. Its function is as follows. Usually encoded in the trnK tRNA gene intron. Probably assists in splicing its own and other chloroplast group II introns. The polypeptide is Maturase K (Amorphophallus titanum (Titan arum)).